Here is a 228-residue protein sequence, read N- to C-terminus: Core-capsid bridging protein (228 aa).

A disordered region spans residues 146–177; the sequence is ARPPAARISPPRRRRRRRRSPRPRATAAYRSS. The segment covering 155–167 has biased composition (basic residues); the sequence is PPRRRRRRRRSPR. Over residues 168-177 the composition is skewed to low complexity; it reads PRATAAYRSS.

It belongs to the adenoviridae core-capsid bridging protein family. As to quaternary structure, monomer. Homodimer. Exists in equilibrium between monomers and dimers in solution. Interacts with the histone-like nucleoprotein; this interactions bridge the virus core to the capsid. Interacts with core protein X; this interactions bridge the virus core to the capsid. Interacts with the endosome lysis protein VI; this interactions bridge the virus core to the capsid. Interacts with the peripentonal hexons. Interacts with host NPM1; this interaction might play a role in virus assembly.

The protein localises to the virion. It is found in the host nucleus. It localises to the host nucleolus. Associates loosely with the viral DNA to form an outer shell around the nucleoprotein-DNA complex and links it with the capsid by binding the endosome lysis protein. Dissociates from the viral genome during entry. Might be involved in nuclear capsid assembly of the viral particles through its association with NPM1/nucleophosmin. The chain is Core-capsid bridging protein from Murine adenovirus A serotype 1 (MAdV-1).